A 419-amino-acid chain; its full sequence is UDP-N-acetylglucosamine 1-carboxyvinyltransferase (419 aa).

Residue 22-23 (KN) coordinates phosphoenolpyruvate. R91 contributes to the UDP-N-acetyl-alpha-D-glucosamine binding site. Residue C115 is the Proton donor of the active site. 2-(S-cysteinyl)pyruvic acid O-phosphothioketal is present on C115. UDP-N-acetyl-alpha-D-glucosamine contacts are provided by residues 120 to 124 (RPVDL), 160 to 163 (KVSV), D305, and V327.

This sequence belongs to the EPSP synthase family. MurA subfamily.

It is found in the cytoplasm. The enzyme catalyses phosphoenolpyruvate + UDP-N-acetyl-alpha-D-glucosamine = UDP-N-acetyl-3-O-(1-carboxyvinyl)-alpha-D-glucosamine + phosphate. It functions in the pathway cell wall biogenesis; peptidoglycan biosynthesis. Its function is as follows. Cell wall formation. Adds enolpyruvyl to UDP-N-acetylglucosamine. In Salmonella dublin (strain CT_02021853), this protein is UDP-N-acetylglucosamine 1-carboxyvinyltransferase.